The following is a 280-amino-acid chain: Tryptophan 2,3-dioxygenase (280 aa).

Residues 47–51, Y109, and R113 each bind substrate; that span reads FVVQH. A heme-binding site is contributed by H236. Residue T250 coordinates substrate.

The protein belongs to the tryptophan 2,3-dioxygenase family. Homotetramer. Heme is required as a cofactor.

It carries out the reaction L-tryptophan + O2 = N-formyl-L-kynurenine. Its pathway is amino-acid degradation; L-tryptophan degradation via kynurenine pathway; L-kynurenine from L-tryptophan: step 1/2. Heme-dependent dioxygenase that catalyzes the oxidative cleavage of the L-tryptophan (L-Trp) pyrrole ring and converts L-tryptophan to N-formyl-L-kynurenine. Catalyzes the oxidative cleavage of the indole moiety. The polypeptide is Tryptophan 2,3-dioxygenase (Serratia proteamaculans (strain 568)).